Here is a 380-residue protein sequence, read N- to C-terminus: MGIQGLAKLIADVAPSAIRENDIKSYFGRKVAIDASMSIYQFLIAVRQGGDVLQNEEGETTSHLMGMFYRTIRMMENGIKPVYVFDGKPPQLKSGELAKRSERRAEAEKQLQEAQAAGAEAEVEKFTKRLVKVTKQHNDECKHLLSLMGIPYLDAPSEAEASCAALVKAGKVYAAATEDMDCLTFGSPVLMRHLTASEAKKLPIQEFHLSRILQELGLNQEQFVDLCILLGSDYCESIRGIGPKRAVDLIQKHKSIEEIVRRLDPNKYPVPENWLHKEAQQLFLEPEVLDPESVELKWSEPNEEELIKFMCGEKQFSEERIRSGVRRLSKSRQGSTQGRLDDFFKVTGSLSSAKRKEPEPKGAAKKKAKTGAAGKFKRGK.

An N-domain region spans residues 1-104 (MGIQGLAKLI…GELAKRSERR (104 aa)). Arginine 19 carries the post-translational modification Symmetric dimethylarginine; by PRMT5. Aspartate 34 contacts Mg(2+). 2 residues coordinate DNA: arginine 47 and arginine 70. Lysine 80 carries the N6-acetyllysine modification. Aspartate 86 serves as a coordination point for Mg(2+). A symmetric dimethylarginine; by PRMT5 mark is found at arginine 100 and arginine 104. Residues 122 to 253 (EVEKFTKRLV…KRAVDLIQKH (132 aa)) form an I-domain region. 4 residues coordinate Mg(2+): glutamate 158, glutamate 160, aspartate 179, and aspartate 181. Glutamate 158 lines the DNA pocket. Serine 187 is subject to Phosphoserine; by CDK2. Residue arginine 192 is modified to Symmetric dimethylarginine; by PRMT5. Serine 197 carries the post-translational modification Phosphoserine. DNA-binding residues include glycine 231 and aspartate 233. Residue aspartate 233 participates in Mg(2+) binding. Phosphoserine occurs at positions 255, 293, and 335. The interval 327–380 (RLSKSRQGSTQGRLDDFFKVTGSLSSAKRKEPEPKGAAKKKAKTGAAGKFKRGK) is disordered. Threonine 336 carries the phosphothreonine modification. An interaction with PCNA region spans residues 336–344 (TQGRLDDFF). An N6-acetyllysine mark is found at lysine 354, lysine 375, lysine 377, and lysine 380. Residues 363-380 (AAKKKAKTGAAGKFKRGK) show a composition bias toward basic residues.

This sequence belongs to the XPG/RAD2 endonuclease family. FEN1 subfamily. Interacts with PCNA. Three molecules of FEN1 bind to one PCNA trimer with each molecule binding to one PCNA monomer. PCNA stimulates the nuclease activity without altering cleavage specificity. The C-terminal domain binds EP300; can bind simultaneously to both PCNA and EP300. Interacts with DDX11; this interaction is direct and increases flap endonuclease activity of FEN1. Interacts with WDR4; regulating its endonuclease activity. Interacts with POLB. Requires Mg(2+) as cofactor. In terms of processing, acetylated by EP300. Acetylation inhibits both endonuclease and exonuclease activity. Acetylation also reduces DNA-binding activity but does not affect interaction with PCNA or EP300. Post-translationally, phosphorylation upon DNA damage induces relocalization to the nuclear plasma. Phosphorylation at Ser-187 by CDK2 occurs during late S-phase and results in dissociation from PCNA. Methylation at Arg-192 by PRMT5 impedes Ser-187 phosphorylation and increases interaction with PCNA.

It localises to the nucleus. Its subcellular location is the nucleolus. It is found in the nucleoplasm. The protein localises to the mitochondrion. Functionally, structure-specific nuclease with 5'-flap endonuclease and 5'-3' exonuclease activities involved in DNA replication and repair. During DNA replication, cleaves the 5'-overhanging flap structure that is generated by displacement synthesis when DNA polymerase encounters the 5'-end of a downstream Okazaki fragment. It enters the flap from the 5'-end and then tracks to cleave the flap base, leaving a nick for ligation. Also involved in the long patch base excision repair (LP-BER) pathway, by cleaving within the apurinic/apyrimidinic (AP) site-terminated flap. Acts as a genome stabilization factor that prevents flaps from equilibrating into structures that lead to duplications and deletions. Also possesses 5'-3' exonuclease activity on nicked or gapped double-stranded DNA, and exhibits RNase H activity. Also involved in replication and repair of rDNA and in repairing mitochondrial DNA. This Bos taurus (Bovine) protein is Flap endonuclease 1.